A 139-amino-acid chain; its full sequence is Large ribosomal subunit protein uL16 (139 aa).

Basic residues predominate over residues 1 to 17 (MLIPRRTKHRKQHHPRR). A disordered region spans residues 1 to 24 (MLIPRRTKHRKQHHPRRTGAASGG).

It belongs to the universal ribosomal protein uL16 family. As to quaternary structure, part of the 50S ribosomal subunit.

In terms of biological role, binds 23S rRNA and is also seen to make contacts with the A and possibly P site tRNAs. This is Large ribosomal subunit protein uL16 from Beutenbergia cavernae (strain ATCC BAA-8 / DSM 12333 / CCUG 43141 / JCM 11478 / NBRC 16432 / NCIMB 13614 / HKI 0122).